The sequence spans 893 residues: ATPase family gene 2 protein homolog A (893 aa).

The segment covering 1–10 (MSSKKNRKRL) has biased composition (basic residues). Residues 1–26 (MSSKKNRKRLNQSAENGSSLPSAASS) are disordered. Positions 1-237 (MSSKKNRKRL…SLELSLQLSQ (237 aa)) are required for interaction with AFG2B and CINP. The segment covering 11-25 (NQSAENGSSLPSAAS) has biased composition (polar residues). Threonine 272 is subject to Phosphothreonine. Serine 274 and serine 279 each carry phosphoserine. ATP-binding positions include 394–401 (GPPGTGKT) and 668–675 (GPPGCSKT). Residue lysine 859 forms a Glycyl lysine isopeptide (Lys-Gly) (interchain with G-Cter in SUMO2) linkage.

This sequence belongs to the AAA ATPase family. AFG2 subfamily. As to quaternary structure, part of the 55LCC heterohexameric ATPase complex composed at least of AIRIM, AFG2A, AFG2B and CINP. Associates with pre-60S ribosomal particles.

Its subcellular location is the cytoplasm. It is found in the mitochondrion. The protein resides in the cytoskeleton. The protein localises to the spindle. It carries out the reaction ATP + H2O = ADP + phosphate + H(+). With respect to regulation, AFG2A alone display limited ATPase activity and is not regulated by RNA or DNA binding. In the context of 55LCC heterohexameric ATPase complex, the ATPase activity increases and is stimulated by DNA binding and inhibited in presence of RNA. ATP-dependent chaperone part of the 55LCC heterohexameric ATPase complex which is chromatin-associated and promotes replisome proteostasis to maintain replication fork progression and genome stability. Required for replication fork progression, sister chromatid cohesion, and chromosome stability. The ATPase activity is specifically enhanced by replication fork DNA and is coupled to cysteine protease-dependent cleavage of replisome substrates in response to replication fork damage. Uses ATPase activity to process replisome substrates in S-phase, facilitating their proteolytic turnover from chromatin to ensure DNA replication and mitotic fidelity. Plays an essential role in the cytoplasmic maturation steps of pre-60S ribosomal particles by promoting the release of shuttling protein RSL24D1/RLP24 from the pre-ribosomal particles. May be involved in morphological and functional mitochondrial transformations during spermatogenesis. The protein is ATPase family gene 2 protein homolog A of Homo sapiens (Human).